The sequence spans 72 residues: Translation initiation factor IF-1 (72 aa).

One can recognise an S1-like domain in the interval 1–72; sequence MAKEDVIEMQ…SKGRIVFRAR (72 aa).

Belongs to the IF-1 family. In terms of assembly, component of the 30S ribosomal translation pre-initiation complex which assembles on the 30S ribosome in the order IF-2 and IF-3, IF-1 and N-formylmethionyl-tRNA(fMet); mRNA recruitment can occur at any time during PIC assembly.

Its subcellular location is the cytoplasm. In terms of biological role, one of the essential components for the initiation of protein synthesis. Stabilizes the binding of IF-2 and IF-3 on the 30S subunit to which N-formylmethionyl-tRNA(fMet) subsequently binds. Helps modulate mRNA selection, yielding the 30S pre-initiation complex (PIC). Upon addition of the 50S ribosomal subunit IF-1, IF-2 and IF-3 are released leaving the mature 70S translation initiation complex. The sequence is that of Translation initiation factor IF-1 from Photobacterium profundum (strain SS9).